A 327-amino-acid chain; its full sequence is Ribose 1,5-bisphosphate isomerase (327 aa).

Residues 25 to 28 (RGAA) and arginine 68 each bind substrate. The Proton acceptor role is filled by cysteine 133. The active-site Proton donor is aspartate 202. Residues 212-213 (NK) and lysine 238 contribute to the substrate site.

It belongs to the eIF-2B alpha/beta/delta subunits family. R15P isomerase subfamily.

It carries out the reaction alpha-D-ribose 1,5-bisphosphate = D-ribulose 1,5-bisphosphate. Functionally, isomerase involved in the non-carboxylating pentose bisphosphate pathway, a nucleoside degradation pathway present in some halophilic archaea. Catalyzes the isomerization of ribose 1,5-bisphosphate (R15P) to ribulose 1,5-bisphosphate (RuBP). This is Ribose 1,5-bisphosphate isomerase from Haloterrigena turkmenica (strain ATCC 51198 / DSM 5511 / JCM 9101 / NCIMB 13204 / VKM B-1734 / 4k) (Halococcus turkmenicus).